We begin with the raw amino-acid sequence, 237 residues long: Protein-S-isoprenylcysteine O-methyltransferase (237 aa).

Transmembrane regions (helical) follow at residues serine 26–phenylalanine 46, phenylalanine 53–methionine 73, phenylalanine 92–serine 112, and phenylalanine 116–alanine 136. Residues glutamine 149, histidine 156–valine 159, tyrosine 164, and histidine 169–tyrosine 172 each bind S-adenosyl-L-methionine. Residues valine 184–serine 204 traverse the membrane as a helical segment. Residue arginine 206 coordinates substrate. S-adenosyl-L-methionine is bound at residue glutamate 210.

The protein belongs to the class VI-like SAM-binding methyltransferase superfamily. Isoprenylcysteine carboxyl methyltransferase family.

The protein localises to the endoplasmic reticulum membrane. The catalysed reaction is [protein]-C-terminal S-[(2E,6E)-farnesyl]-L-cysteine + S-adenosyl-L-methionine = [protein]-C-terminal S-[(2E,6E)-farnesyl]-L-cysteine methyl ester + S-adenosyl-L-homocysteine. Its function is as follows. Methylates the C-terminal cysteine residues of small GTPases and the heterotrimeric G protein gamma subunit in response to cAMP. The methylation is required for intercellular signaling and regulation of cAMP waves propagation. It also seems to induce the activity of car1, a G protein-coupled receptor which senses extracellular cAMP during the aggregation phase of development. The sequence is that of Protein-S-isoprenylcysteine O-methyltransferase (icmt-1) from Dictyostelium discoideum (Social amoeba).